Reading from the N-terminus, the 557-residue chain is Dihydroxy-acid dehydratase (557 aa).

Aspartate 78 serves as a coordination point for Mg(2+). Position 119 (cysteine 119) interacts with [2Fe-2S] cluster. Mg(2+) is bound by residues aspartate 120 and lysine 121. An N6-carboxylysine modification is found at lysine 121. Cysteine 192 is a [2Fe-2S] cluster binding site. Residue glutamate 443 coordinates Mg(2+). The active-site Proton acceptor is serine 469.

The protein belongs to the IlvD/Edd family. Homodimer. Requires [2Fe-2S] cluster as cofactor. Mg(2+) is required as a cofactor.

It catalyses the reaction (2R)-2,3-dihydroxy-3-methylbutanoate = 3-methyl-2-oxobutanoate + H2O. It carries out the reaction (2R,3R)-2,3-dihydroxy-3-methylpentanoate = (S)-3-methyl-2-oxopentanoate + H2O. It functions in the pathway amino-acid biosynthesis; L-isoleucine biosynthesis; L-isoleucine from 2-oxobutanoate: step 3/4. Its pathway is amino-acid biosynthesis; L-valine biosynthesis; L-valine from pyruvate: step 3/4. Functionally, functions in the biosynthesis of branched-chain amino acids. Catalyzes the dehydration of (2R,3R)-2,3-dihydroxy-3-methylpentanoate (2,3-dihydroxy-3-methylvalerate) into 2-oxo-3-methylpentanoate (2-oxo-3-methylvalerate) and of (2R)-2,3-dihydroxy-3-methylbutanoate (2,3-dihydroxyisovalerate) into 2-oxo-3-methylbutanoate (2-oxoisovalerate), the penultimate precursor to L-isoleucine and L-valine, respectively. The polypeptide is Dihydroxy-acid dehydratase (Sulfurihydrogenibium sp. (strain YO3AOP1)).